The sequence spans 476 residues: Cardiolipin synthase (476 aa).

The next 2 helical transmembrane spans lie at 2–22 (HLFI…IIFI) and 31–51 (WAWI…YILF). PLD phosphodiesterase domains follow at residues 207–234 (INYR…GDEY) and 389–416 (EKGF…DIRS). Catalysis depends on residues H212, K214, D219, H394, K396, and D401.

It belongs to the phospholipase D family. Cardiolipin synthase subfamily.

The protein resides in the cell membrane. It catalyses the reaction 2 a 1,2-diacyl-sn-glycero-3-phospho-(1'-sn-glycerol) = a cardiolipin + glycerol. Functionally, catalyzes the reversible phosphatidyl group transfer from one phosphatidylglycerol molecule to another to form cardiolipin (CL) (diphosphatidylglycerol) and glycerol. The polypeptide is Cardiolipin synthase (cls) (Clostridium perfringens (strain 13 / Type A)).